A 136-amino-acid polypeptide reads, in one-letter code: Histone H3.3 (136 aa).

The segment at 1–42 is disordered; that stretch reads MARTKQTARKSTGGKAPRKQLASKAARKSAPVSGGVKKPHRY. Lys-5 is modified (N6,N6,N6-trimethyllysine; alternate). Lys-5 is subject to N6,N6-dimethyllysine; alternate. An N6-methyllysine; alternate mark is found at Lys-5 and Lys-10. Lys-10 bears the N6-acetyllysine; alternate mark. Ser-11 carries the post-translational modification Phosphoserine. At Lys-15 the chain carries N6,N6-dimethyllysine; alternate. 5 positions are modified to N6-acetyllysine; alternate: Lys-15, Lys-19, Lys-24, Lys-28, and Lys-37. N6-methyllysine; alternate occurs at positions 19, 24, 28, and 37. Residues Lys-28 and Lys-37 each carry the N6,N6,N6-trimethyllysine; alternate modification. An N6,N6-dimethyllysine; alternate mark is found at Lys-28 and Lys-37. N6-acetyllysine is present on residues Lys-57 and Lys-65. Position 80 is an N6,N6,N6-trimethyllysine; alternate (Lys-80). Lys-80 is subject to N6,N6-dimethyllysine; alternate. Lys-80 bears the N6-methyllysine; alternate mark.

The protein belongs to the histone H3 family. As to quaternary structure, the nucleosome is a histone octamer containing two molecules each of H2A, H2B, H3 and H4 assembled in one H3-H4 heterotetramer and two H2A-H2B heterodimers. The octamer wraps approximately 147 bp of DNA. In terms of processing, phosphorylated by IPL1 to form H3S10ph. H3S10ph promotes subsequent H3K14ac formation and is required for transcriptional activation through TBP recruitment to the promoters. Post-translationally, mono-, di- and trimethylated by the COMPASS complex to form H3K4me1/2/3. H3K4me activates gene expression by regulating transcription elongation and plays a role in telomere length maintenance. H3K4me enrichment correlates with transcription levels, and occurs in a 5' to 3' gradient with H3K4me3 enrichment at the 5'-end of genes, shifting to H3K4me2 and then H3K4me1. Methylated by SET2 to form H3K36me. H3K36me represses gene expression. Methylated by DOT1 to form H3K79me. H3K79me is required for association of SIR proteins with telomeric regions and for telomeric silencing. The COMPASS-mediated formation of H3K4me2/3 and the DOT1-mediated formation of H3K79me require H2BK123ub1. Acetylation of histone H3 leads to transcriptional activation. H3K14ac formation by GCN5 is promoted by H3S10ph. H3K14ac can also be formed by ESA1. H3K56ac formation occurs predominantly in newly synthesized H3 molecules during G1, S and G2/M of the cell cycle and may be involved in DNA repair.

The protein localises to the nucleus. It is found in the chromosome. Functionally, core component of nucleosome. Nucleosomes wrap and compact DNA into chromatin, limiting DNA accessibility to the cellular machineries which require DNA as a template. Histones thereby play a central role in transcription regulation, DNA repair, DNA replication and chromosomal stability. DNA accessibility is regulated via a complex set of post-translational modifications of histones, also called histone code, and nucleosome remodeling. The polypeptide is Histone H3.3 (HHT3) (Candida albicans (strain SC5314 / ATCC MYA-2876) (Yeast)).